Here is a 383-residue protein sequence, read N- to C-terminus: Large ribosomal subunit protein uL3 (383 aa).

Belongs to the universal ribosomal protein uL3 family.

The protein localises to the cytoplasm. The sequence is that of Large ribosomal subunit protein uL3 (RPL3-1) from Encephalitozoon cuniculi (strain GB-M1) (Microsporidian parasite).